Here is a 65-residue protein sequence, read N- to C-terminus: Large ribosomal subunit protein bL35 (65 aa).

The disordered stretch occupies residues 1 to 65 (MPKMKTNRAA…GRLDRMLPYL (65 aa)). A compositionally biased stretch (basic residues) spans 10 to 44 (AAKRFRKTASGKYKAGHANRSHILTKKATKRKRNL). Positions 50-65 (VRAEDAGRLDRMLPYL) are enriched in basic and acidic residues.

This sequence belongs to the bacterial ribosomal protein bL35 family.

This Xylella fastidiosa (strain M12) protein is Large ribosomal subunit protein bL35.